A 1071-amino-acid chain; its full sequence is ATP-dependent helicase/deoxyribonuclease subunit B (1071 aa).

It belongs to the helicase family. AddB/RexB type 2 subfamily. In terms of assembly, heterodimer of AddA and RexB. Requires Mg(2+) as cofactor.

In terms of biological role, the heterodimer acts as both an ATP-dependent DNA helicase and an ATP-dependent, dual-direction single-stranded exonuclease. Recognizes the chi site generating a DNA molecule suitable for the initiation of homologous recombination. This subunit has 5' -&gt; 3' nuclease activity but not helicase activity. This Streptococcus pyogenes serotype M18 (strain MGAS8232) protein is ATP-dependent helicase/deoxyribonuclease subunit B.